A 457-amino-acid polypeptide reads, in one-letter code: UDP-N-acetylglucosamine 1-carboxyvinyltransferase (457 aa).

Phosphoenolpyruvate is bound at residue K34–N35. UDP-N-acetyl-alpha-D-glucosamine is bound at residue R104. The active-site Proton donor is the C128. A 2-(S-cysteinyl)pyruvic acid O-phosphothioketal modification is found at C128. UDP-N-acetyl-alpha-D-glucosamine is bound by residues D319 and I341. Positions I436 to A457 are disordered. A compositionally biased stretch (basic and acidic residues) spans K447–A457.

This sequence belongs to the EPSP synthase family. MurA subfamily.

It localises to the cytoplasm. The enzyme catalyses phosphoenolpyruvate + UDP-N-acetyl-alpha-D-glucosamine = UDP-N-acetyl-3-O-(1-carboxyvinyl)-alpha-D-glucosamine + phosphate. The protein operates within cell wall biogenesis; peptidoglycan biosynthesis. In terms of biological role, cell wall formation. Adds enolpyruvyl to UDP-N-acetylglucosamine. This is UDP-N-acetylglucosamine 1-carboxyvinyltransferase from Prochlorococcus marinus subsp. pastoris (strain CCMP1986 / NIES-2087 / MED4).